We begin with the raw amino-acid sequence, 1337 residues long: ATP-dependent helicase/nuclease subunit A (1337 aa).

A UvrD-like helicase ATP-binding domain is found at 3 to 484; the sequence is FTPSKEQEPA…LDLSDNYRSR (482 aa). Position 24-31 (24-31) interacts with ATP; it reads ASAGSGKT. The 346-residue stretch at 522 to 867 folds into the UvrD-like helicase C-terminal domain; the sequence is ADRDQASPAT…NVMTIHKSKG (346 aa).

The protein belongs to the helicase family. AddA subfamily. As to quaternary structure, heterodimer of AddA and AddB/RexB. It depends on Mg(2+) as a cofactor.

The catalysed reaction is Couples ATP hydrolysis with the unwinding of duplex DNA by translocating in the 3'-5' direction.. It carries out the reaction ATP + H2O = ADP + phosphate + H(+). The heterodimer acts as both an ATP-dependent DNA helicase and an ATP-dependent, dual-direction single-stranded exonuclease. Recognizes the chi site generating a DNA molecule suitable for the initiation of homologous recombination. The AddA nuclease domain is required for chi fragment generation; this subunit has the helicase and 3' -&gt; 5' nuclease activities. The polypeptide is ATP-dependent helicase/nuclease subunit A (Limosilactobacillus fermentum (strain NBRC 3956 / LMG 18251) (Lactobacillus fermentum)).